Consider the following 109-residue polypeptide: Mannose-specific lectin (109 aa).

In terms of domain architecture, Bulb-type lectin spans 25–109 (MQEDCNLVLY…ARWATGTNIH (85 aa)). Alpha-D-mannopyranose is bound by residues Q26, D28, N30, Y34, D37, K38, W41, A42, N44, Q57, D59, N61, Y65, I72, W73, N76, N83, Q89, D91, N93, Y97, and W102. Residues C29 and C52 are joined by a disulfide bond.

As to quaternary structure, homotetramer; antiparallel. In terms of tissue distribution, detected in bulbs (at protein level).

Its subcellular location is the secreted. With respect to regulation, strongly inhibited by alpha-1,6-linked mannotriose. Inhibited by various oligosaccharides of P.pastoris mannan including, Man(alpha-l,6)Man-alpha-O-Me, Man(alpha-l,2)Man, Man(alpha-l,3)Man-alpha-O-Me, Man(alpha-l,2)Man, alpha-1,2-linked mannotriose, and Man(alpha-1,6)Glc, in order of decreasing potency. Weakly inhibited by elsinotetraose. Not inhibited by maltose or nigerose. In terms of biological role, D-mannose-binding lectin which binds alpha-D-linked mannose. Displays a high affinity for alpha-(1-6)-mannose oligomers. Able to interact with both terminal and internal alpha-D-mannosyl residues. Displays antiviral activity and therefore may contribute to defense against infections. The protein is Mannose-specific lectin of Narcissus pseudonarcissus (Daffodil).